A 901-amino-acid polypeptide reads, in one-letter code: Protein translocase subunit SecA (901 aa).

Residues Q87, G105–T109, and D512 contribute to the ATP site. Positions H859 to Q901 are disordered. Positions 885, 887, 896, and 897 each coordinate Zn(2+). Residues K891 to Q901 show a composition bias toward basic residues.

The protein belongs to the SecA family. In terms of assembly, monomer and homodimer. Part of the essential Sec protein translocation apparatus which comprises SecA, SecYEG and auxiliary proteins SecDF-YajC and YidC. Zn(2+) serves as cofactor.

The protein resides in the cell inner membrane. It is found in the cytoplasm. The catalysed reaction is ATP + H2O + cellular proteinSide 1 = ADP + phosphate + cellular proteinSide 2.. In terms of biological role, part of the Sec protein translocase complex. Interacts with the SecYEG preprotein conducting channel. Has a central role in coupling the hydrolysis of ATP to the transfer of proteins into and across the cell membrane, serving both as a receptor for the preprotein-SecB complex and as an ATP-driven molecular motor driving the stepwise translocation of polypeptide chains across the membrane. This Escherichia coli (strain 55989 / EAEC) protein is Protein translocase subunit SecA.